Consider the following 170-residue polypeptide: Adenine phosphoribosyltransferase (170 aa).

It belongs to the purine/pyrimidine phosphoribosyltransferase family. As to quaternary structure, homodimer.

It localises to the cytoplasm. The enzyme catalyses AMP + diphosphate = 5-phospho-alpha-D-ribose 1-diphosphate + adenine. The protein operates within purine metabolism; AMP biosynthesis via salvage pathway; AMP from adenine: step 1/1. In terms of biological role, catalyzes a salvage reaction resulting in the formation of AMP, that is energically less costly than de novo synthesis. This chain is Adenine phosphoribosyltransferase, found in Fervidobacterium nodosum (strain ATCC 35602 / DSM 5306 / Rt17-B1).